The following is a 364-amino-acid chain: N-acetyl-gamma-glutamyl-phosphate reductase (364 aa).

C157 is an active-site residue.

This sequence belongs to the NAGSA dehydrogenase family. Type 1 subfamily.

The protein resides in the cytoplasm. It catalyses the reaction N-acetyl-L-glutamate 5-semialdehyde + phosphate + NADP(+) = N-acetyl-L-glutamyl 5-phosphate + NADPH + H(+). The protein operates within amino-acid biosynthesis; L-arginine biosynthesis; N(2)-acetyl-L-ornithine from L-glutamate: step 3/4. Catalyzes the NADPH-dependent reduction of N-acetyl-5-glutamyl phosphate to yield N-acetyl-L-glutamate 5-semialdehyde. The chain is N-acetyl-gamma-glutamyl-phosphate reductase from Bifidobacterium longum (strain DJO10A).